Reading from the N-terminus, the 589-residue chain is Complement component C8 beta chain (589 aa).

The N-terminal stretch at 1–31 (MKIGAQVWRALAKSCLLCATLGCLHFPGSRG) is a signal peptide. A propeptide spanning residues 32-53 (GKPDFFETKAVNGSLVKSRPVR) is cleaved from the precursor. N-linked (GlcNAc...) asparagine glycosylation is present at N43. The region spanning 63 to 116 (DCELSTWSSWTACDPCQKKRYRHTYLLRPSQFYGELCDLSDKEVEDCVTNQPCR) is the TSP type-1 1 domain. Intrachain disulfides connect C64–C99, C75–C109, C78–C115, C121–C132, C126–C145, C139–C154, and C161–C199. C-linked (Man) tryptophan glycosylation is found at W69 and W72. One can recognise an LDL-receptor class A domain in the interval 120 to 155 (RCEGFVCAQTGRCVNRRLLCNGDNDCGDQSDEANCR). The Ca(2+) site is built by L137, N140, D142, D144, D150, and E151. One can recognise an MACPF domain in the interval 157-503 (IYKNCQREME…EFQSEVSSCR (347 aa)). Transmembrane regions (beta stranded) follow at residues 201 to 206 (PHYILD), 209 to 213 (FRKPY), 251 to 258 (FNFTSGFK), 261 to 268 (GVMDLGIK), 328 to 335 (SYGEYRDL), 338 to 343 (DFGTHF), 378 to 385 (AGGSFGIG), and 391 to 398 (VYVKVGVS). C377 and C402 are disulfide-bonded. Positions 404 to 534 (DIMKEINERN…PGGFQGTACE (131 aa)) constitute an EGF-like domain. At T417 the chain carries Phosphothreonine. Cystine bridges form between C502/C549, C504/C520, C507/C522, and C524/C533. The TSP type-1 2 domain maps to 544-587 (DGKWSCWSDWSACSGGHKTRHRQCNNPAPHKGGSPCSGPASETL). C-linked (Man) tryptophan glycans are attached at residues W550 and W553. An intrachain disulfide couples C556 to C589. Positions 570–589 (PAPHKGGSPCSGPASETLNC) are disordered.

It belongs to the complement C6/C7/C8/C9 family. As to quaternary structure, heterotrimer of 3 chains: alpha (C8A), beta (C8B) and gamma (C8G); the alpha and gamma chains are disulfide bonded. Component of the membrane attack complex (MAC), composed of complement C5b, C6, C7, C8A, C8B, C8G and multiple copies of the pore-forming subunit C9. Post-translationally, N-glycosylated; contains one or two bound glycans. Not O-glycosylated.

The protein localises to the secreted. It is found in the target cell membrane. Its activity is regulated as follows. Membrane attack complex (MAC) assembly is inhibited by CD59, thereby protecting self-cells from damage during complement activation. CD59 acts by binding to the beta-haipins of C8 (C8A and C8B), forming an intermolecular beta-sheet that prevents incorporation of the multiple copies of C9 required for complete formation of the osmolytic pore. MAC assembly is also inhibited by clusterin (CLU) chaperones that inhibit polymerization of C9. Functionally, component of the membrane attack complex (MAC), a multiprotein complex activated by the complement cascade, which inserts into a target cell membrane and forms a pore, leading to target cell membrane rupture and cell lysis. The MAC is initiated by proteolytic cleavage of C5 into complement C5b in response to the classical, alternative, lectin and GZMK complement pathways. The complement pathways consist in a cascade of proteins that leads to phagocytosis and breakdown of pathogens and signaling that strengthens the adaptive immune system. C8B, together with C8A and C8G, inserts into the target membrane, but does not form pores by itself. During MAC assembly, associates with C5b, C6 and C7 to form the C5b8 intermediate complex that inserts into the target membrane and traverses the bilayer increasing membrane rigidity. This Mus musculus (Mouse) protein is Complement component C8 beta chain (C8b).